The sequence spans 299 residues: Ribonuclease H2 subunit A (299 aa).

The residue at position 1 (Met-1) is an N-acetylmethionine. The region spanning 28-250 (PCVLGVDEAG…AQTILEKEAE (223 aa)) is the RNase H type-2 domain. A divalent metal cation contacts are provided by Asp-34, Glu-35, and Asp-141. 2 positions are modified to phosphothreonine: Thr-204 and Thr-216. 2 positions are modified to phosphoserine: Ser-257 and Ser-277.

The protein belongs to the RNase HII family. Eukaryotic subfamily. In terms of assembly, the RNase H2 complex is a heterotrimer composed of the catalytic subunit RNASEH2A and the non-catalytic subunits RNASEH2B and RNASEH2C. The cofactor is Mn(2+). Mg(2+) serves as cofactor.

It is found in the nucleus. It catalyses the reaction Endonucleolytic cleavage to 5'-phosphomonoester.. Functionally, catalytic subunit of RNase HII, an endonuclease that specifically degrades the RNA of RNA:DNA hybrids. Participates in DNA replication, possibly by mediating the removal of lagging-strand Okazaki fragment RNA primers during DNA replication. Mediates the excision of single ribonucleotides from DNA:RNA duplexes. The chain is Ribonuclease H2 subunit A (RNASEH2A) from Homo sapiens (Human).